The sequence spans 297 residues: Protease HtpX homolog (297 aa).

2 helical membrane-spanning segments follow: residues 14–34 (IVLL…VGYL) and 38–58 (SLET…IIMV). Histidine 144 serves as a coordination point for Zn(2+). Glutamate 145 is a catalytic residue. Histidine 148 is a Zn(2+) binding site. A run of 2 helical transmembrane segments spans residues 159-179 (IALA…NWWF) and 199-219 (ILLL…AAAI). Glutamate 228 is a binding site for Zn(2+).

Belongs to the peptidase M48B family. It depends on Zn(2+) as a cofactor.

The protein localises to the cell membrane. The sequence is that of Protease HtpX homolog from Leuconostoc mesenteroides subsp. mesenteroides (strain ATCC 8293 / DSM 20343 / BCRC 11652 / CCM 1803 / JCM 6124 / NCDO 523 / NBRC 100496 / NCIMB 8023 / NCTC 12954 / NRRL B-1118 / 37Y).